A 438-amino-acid chain; its full sequence is ATP-dependent RNA helicase RhlB (438 aa).

Positions 9–37 (QRFADLPLHPEVKQALAENGFEFCTPIQA) match the Q motif motif. Positions 40 to 219 (LPVLLQSKDI…YDHMNEPVKV (180 aa)) constitute a Helicase ATP-binding domain. 53–60 (AQTGTGKT) serves as a coordination point for ATP. The DEAD box motif lies at 165–168 (DEAD). The Helicase C-terminal domain maps to 243 to 390 (KMRLLLTLIE…VSNYDSEALL (148 aa)). The segment at 395–438 (TPAKIHRKHPSGTRNLRDRSGASRPGAQRSGARPPRHDRTRRHS) is disordered. Positions 428–438 (PPRHDRTRRHS) are enriched in basic residues.

It belongs to the DEAD box helicase family. RhlB subfamily. Component of the RNA degradosome, which is a multiprotein complex involved in RNA processing and mRNA degradation.

It is found in the cytoplasm. It catalyses the reaction ATP + H2O = ADP + phosphate + H(+). Functionally, DEAD-box RNA helicase involved in RNA degradation. Has RNA-dependent ATPase activity and unwinds double-stranded RNA. This Shewanella baltica (strain OS185) protein is ATP-dependent RNA helicase RhlB.